The chain runs to 198 residues: Recombination protein RecR (198 aa).

Residues 58-73 (CLNCGNVGTSDICDIC) form a C4-type zinc finger. The 95-residue stretch at 81-175 (GELCVVEDVA…RLTSLAQGVP (95 aa)) folds into the Toprim domain.

The protein belongs to the RecR family.

In terms of biological role, may play a role in DNA repair. It seems to be involved in an RecBC-independent recombinational process of DNA repair. It may act with RecF and RecO. The sequence is that of Recombination protein RecR from Ruegeria pomeroyi (strain ATCC 700808 / DSM 15171 / DSS-3) (Silicibacter pomeroyi).